A 57-amino-acid chain; its full sequence is Large ribosomal subunit protein eL20 (57 aa).

It belongs to the eukaryotic ribosomal protein eL20 family. Part of the 50S ribosomal subunit. Binds 23S rRNA.

This chain is Large ribosomal subunit protein eL20, found in Archaeoglobus fulgidus (strain ATCC 49558 / DSM 4304 / JCM 9628 / NBRC 100126 / VC-16).